Consider the following 208-residue polypeptide: uncharacterized protein (208 aa).

In terms of domain architecture, J spans 4-71 (DYYAILNITP…SRRAQYDRES (68 aa)). A disordered region spans residues 67-100 (YDRESASSSAKPRQSFFSRTNPQPQSQSQQGGPS). Residues 72–87 (ASSSAKPRQSFFSRTN) show a composition bias toward polar residues. Positions 88–100 (PQPQSQSQQGGPS) are enriched in low complexity. A helical transmembrane segment spans residues 127–147 (GIANAFWTIVGTLAGAALGFI).

Belongs to the DnaJ family.

The protein resides in the endoplasmic reticulum membrane. This is an uncharacterized protein from Schizosaccharomyces pombe (strain 972 / ATCC 24843) (Fission yeast).